Here is a 194-residue protein sequence, read N- to C-terminus: Cysteine and glycine-rich protein 2 (194 aa).

One can recognise an LIM zinc-binding 1 domain in the interval cysteine 10–cysteine 61. A Nuclear localization signal motif is present at residues lysine 64–lysine 69. The region spanning cysteine 120–cysteine 171 is the LIM zinc-binding 2 domain.

It is found in the nucleus. Functionally, totally down-regulated in transformed cells. May therefore take part in the control of cell growth and differentiation. This Gallus gallus (Chicken) protein is Cysteine and glycine-rich protein 2 (CSRP2).